Reading from the N-terminus, the 166-residue chain is Endoribonuclease YbeY (166 aa).

Zn(2+)-binding residues include His132, His136, and His142.

Belongs to the endoribonuclease YbeY family. Zn(2+) serves as cofactor.

The protein localises to the cytoplasm. Its function is as follows. Single strand-specific metallo-endoribonuclease involved in late-stage 70S ribosome quality control and in maturation of the 3' terminus of the 16S rRNA. The polypeptide is Endoribonuclease YbeY (Clostridium botulinum (strain 657 / Type Ba4)).